Consider the following 39-residue polypeptide: Cytochrome b559 subunit beta (39 aa).

A helical membrane pass occupies residues 14–30; sequence WLAVHGLAVPTVFFLGS. Residue His-18 coordinates heme.

The protein belongs to the PsbE/PsbF family. As to quaternary structure, heterodimer of an alpha subunit and a beta subunit. PSII is composed of 1 copy each of membrane proteins PsbA, PsbB, PsbC, PsbD, PsbE, PsbF, PsbH, PsbI, PsbJ, PsbK, PsbL, PsbM, PsbT, PsbX, PsbY, PsbZ, Psb30/Ycf12, at least 3 peripheral proteins of the oxygen-evolving complex and a large number of cofactors. It forms dimeric complexes. It depends on heme b as a cofactor.

The protein resides in the plastid. It localises to the chloroplast thylakoid membrane. Its function is as follows. This b-type cytochrome is tightly associated with the reaction center of photosystem II (PSII). PSII is a light-driven water:plastoquinone oxidoreductase that uses light energy to abstract electrons from H(2)O, generating O(2) and a proton gradient subsequently used for ATP formation. It consists of a core antenna complex that captures photons, and an electron transfer chain that converts photonic excitation into a charge separation. The protein is Cytochrome b559 subunit beta of Welwitschia mirabilis (Tree tumbo).